A 363-amino-acid polypeptide reads, in one-letter code: DNA replication and repair protein RecF (363 aa).

ATP is bound at residue 30 to 37 (GPNGSGKT).

Belongs to the RecF family.

Its subcellular location is the cytoplasm. In terms of biological role, the RecF protein is involved in DNA metabolism; it is required for DNA replication and normal SOS inducibility. RecF binds preferentially to single-stranded, linear DNA. It also seems to bind ATP. This chain is DNA replication and repair protein RecF, found in Vibrio cholerae serotype O1 (strain ATCC 39541 / Classical Ogawa 395 / O395).